A 614-amino-acid chain; its full sequence is DNA mismatch repair protein MutL (614 aa).

This sequence belongs to the DNA mismatch repair MutL/HexB family.

Functionally, this protein is involved in the repair of mismatches in DNA. It is required for dam-dependent methyl-directed DNA mismatch repair. May act as a 'molecular matchmaker', a protein that promotes the formation of a stable complex between two or more DNA-binding proteins in an ATP-dependent manner without itself being part of a final effector complex. This chain is DNA mismatch repair protein MutL, found in Thermoanaerobacter sp. (strain X514).